The sequence spans 265 residues: 2-amino-3,7-dideoxy-D-threo-hept-6-ulosonate synthase (265 aa).

Asp-25 acts as the Proton acceptor in catalysis. Residues 25 to 29 (DHGIT) and 144 to 146 (YAR) each bind 1-deoxy-D-threo-hexo-2,5-diulose 6-phosphate. Tyr-144 functions as the Proton donor in the catalytic mechanism. Lys-174 acts as the Schiff-base intermediate with substrate in catalysis. 1-deoxy-D-threo-hexo-2,5-diulose 6-phosphate contacts are provided by residues 199 to 200 (GG) and 226 to 227 (GR).

It belongs to the DeoC/FbaB aldolase family. ADHS subfamily. Homodecamer.

It carries out the reaction 1-deoxy-D-threo-hexo-2,5-diulose 6-phosphate + L-aspartate 4-semialdehyde = 2,3-dioxopropyl phosphate + 2-amino-2,3,7-trideoxy-D-lyxo-hept-6-ulosonate. In terms of biological role, catalyzes a transaldol reaction between 6-deoxy-5-ketofructose 1-phosphate (DKFP) and L-aspartate semialdehyde (ASA) with an elimination of hydroxypyruvaldehyde phosphate to yield 2-amino-3,7-dideoxy-D-threo-hept-6-ulosonate (ADH). Plays a key role in an alternative pathway of the biosynthesis of 3-dehydroquinate (DHQ), which is involved in the canonical pathway for the biosynthesis of aromatic amino acids. This is 2-amino-3,7-dideoxy-D-threo-hept-6-ulosonate synthase from Halobacterium salinarum (strain ATCC 700922 / JCM 11081 / NRC-1) (Halobacterium halobium).